We begin with the raw amino-acid sequence, 128 residues long: Natriuretic peptides A (128 aa).

Positions 36–84 (QVASEQNEEAGAVLSALPEVPSWPGEAGPAQREGGALGRGPWDSSDRSA) are disordered. A propeptide spanning residues 68–78 (EGGALGRGPWD) is cleaved from the precursor. The residue at position 104 (Ser-104) is a Phosphoserine. A disulfide bridge links Cys-105 with Cys-121. The interval 122 to 126 (NSFRY) is important for degradation of atrial natriuretic peptide by IDE.

This sequence belongs to the natriuretic peptide family. As to quaternary structure, homodimer; disulfide-linked antiparallel dimer. The precursor molecule is proteolytically cleaved by CORIN at Arg-98 to produce atrial natriuretic peptide. Undergoes further proteolytic cleavage by unknown proteases to give rise to long-acting natriuretic peptide, vessel dilator and kaliuretic peptide. Additional processing gives rise to the auriculin and atriopeptin peptides. In the kidneys, alternative processing by an unknown protease results in the peptide urodilatin. In terms of processing, cleavage by MME initiates degradation of the factor and thereby regulates its activity. Degraded by IDE (in vitro). During IDE degradation, the resulting products can temporarily stimulate NPR2 to produce cGMP, before the fragments are completely degraded and inactivated by IDE (in vitro). Post-translationally, degraded by IDE. Phosphorylation on Ser-104 decreases vasorelaxant activity.

Its subcellular location is the secreted. It localises to the perikaryon. The protein resides in the cell projection. Hormone that plays a key role in mediating cardio-renal homeostasis, and is involved in vascular remodeling and regulating energy metabolism. Acts by specifically binding and stimulating NPR1 to produce cGMP, which in turn activates effector proteins, such as PRKG1, that drive various biological responses. Regulates vasodilation, natriuresis, diuresis and aldosterone synthesis and is therefore essential for regulating blood pressure, controlling the extracellular fluid volume and maintaining the fluid-electrolyte balance. Also involved in inhibiting cardiac remodeling and cardiac hypertrophy by inducing cardiomyocyte apoptosis and attenuating the growth of cardiomyocytes and fibroblasts. Plays a role in female pregnancy by promoting trophoblast invasion and spiral artery remodeling in uterus, and thus prevents pregnancy-induced hypertension. In adipose tissue, acts in various cGMP- and PKG-dependent pathways to regulate lipid metabolism and energy homeostasis. This includes up-regulating lipid metabolism and mitochondrial oxygen utilization by activating the AMP-activated protein kinase (AMPK), and increasing energy expenditure by acting via MAPK11 to promote the UCP1-dependent thermogenesis of brown adipose tissue. Binds the clearance receptor NPR3 which removes the hormone from circulation. Functionally, may have a role in cardio-renal homeostasis through regulation of natriuresis, diuresis, vasodilation, and inhibiting aldosterone synthesis. In vitro, promotes the production of cGMP and induces vasodilation. May promote natriuresis, at least in part, by enhancing prostaglandin E2 synthesis resulting in the inhibition of renal Na+-K+-ATPase. However reports on the involvement of this peptide in mammal blood volume and blood pressure homeostasis are conflicting; according to a report, in vivo it is not sufficient to activate cGMP and does not inhibit collecting duct transport nor effect diuresis and natriuresis. Appears to bind to specific receptors that are distinct from the receptors bound by atrial natriuretic peptide and vessel dilator. Possibly enhances protein excretion in urine by decreasing proximal tubular protein reabsorption. Its function is as follows. May have a role in cardio-renal homeostasis through regulation of natriuresis, diuresis, and vasodilation. In vitro, promotes the production of cGMP and induces vasodilation. May promote natriuresis, at least in part, by enhancing prostaglandin E2 synthesis resulting in the inhibition of renal Na+-K+-ATPase. However reports on the involvement of this peptide in mammal blood volume and blood pressure homeostasis are conflicting; according to a report it is not sufficient to activate cGMP and does not inhibit collecting duct transport nor effect diuresis and natriuresis. Appears to bind to specific receptors that are distinct from the receptors bound by the atrial natriuretic and long-acting natriuretic peptides. Possibly functions in protein excretion in urine by maintaining the integrity of the proximal tubules and enhancing protein excretion by decreasing proximal tubular protein reabsorption. In terms of biological role, may have a role in cardio-renal homeostasis through regulation of diuresis and inhibiting aldosterone synthesis. In vitro, promotes the production of cGMP and induces vasodilation. May promote natriuresis, at least in part, by enhancing prostaglandin E2 synthesis resulting in the inhibition of renal Na+-K+-ATPase. May have a role in potassium excretion but not sodium excretion (natriuresis). Possibly enhances protein excretion in urine by decreasing proximal tubular protein reabsorption. Hormone produced in the kidneys that appears to be important for maintaining cardio-renal homeostasis. Mediates vasodilation, natriuresis and diuresis primarily in the renal system, in order to maintain the extracellular fluid volume and control the fluid-electrolyte balance. Specifically binds and stimulates cGMP production by renal transmembrane receptors, likely NPR1. Urodilatin not ANP, may be the natriuretic peptide responsible for the regulation of sodium and water homeostasis in the kidney. Functionally, may have a role in cardio-renal homeostasis through regulation of natriuresis and vasodilation. In vivo promotes natriuresis and in vitro, vasodilates renal artery strips. Its function is as follows. May have a role in cardio-renal homeostasis through regulation of regulation of natriuresis and vasodilation. In vivo promotes natriuresis. In vitro, vasodilates intestinal smooth muscle but not smooth muscle strips. In terms of biological role, may have a role in cardio-renal homeostasis through regulation of natriuresis and vasodilation. In vivo promotes natriuresis. In vitro, selectively vasodilates intestinal and vascular smooth muscle strips. May have a role in cardio-renal homeostasis through regulation of natriuresis and vasodilation. In vivo promotes natriuresis. In vitro, selectively vasodilates intestinal smooth muscle but not vascular smooth muscle strips. This chain is Natriuretic peptides A (NPPA), found in Cavia porcellus (Guinea pig).